Reading from the N-terminus, the 513-residue chain is ATP synthase subunit alpha (513 aa).

ATP is bound at residue glycine 169 to threonine 176.

This sequence belongs to the ATPase alpha/beta chains family. F-type ATPases have 2 components, CF(1) - the catalytic core - and CF(0) - the membrane proton channel. CF(1) has five subunits: alpha(3), beta(3), gamma(1), delta(1), epsilon(1). CF(0) has three main subunits: a(1), b(2) and c(9-12). The alpha and beta chains form an alternating ring which encloses part of the gamma chain. CF(1) is attached to CF(0) by a central stalk formed by the gamma and epsilon chains, while a peripheral stalk is formed by the delta and b chains.

The protein resides in the cell inner membrane. The catalysed reaction is ATP + H2O + 4 H(+)(in) = ADP + phosphate + 5 H(+)(out). In terms of biological role, produces ATP from ADP in the presence of a proton gradient across the membrane. The alpha chain is a regulatory subunit. This is ATP synthase subunit alpha from Enterobacter sp. (strain 638).